The following is a 250-amino-acid chain: Type III pantothenate kinase (250 aa).

6–13 (DVGNTNTV) is a binding site for ATP. 103-106 (GADR) lines the substrate pocket. D105 (proton acceptor) is an active-site residue. Residue D125 coordinates K(+). Residue T128 coordinates ATP. Substrate is bound at residue T180.

Belongs to the type III pantothenate kinase family. In terms of assembly, homodimer. The cofactor is NH4(+). K(+) serves as cofactor.

Its subcellular location is the cytoplasm. The catalysed reaction is (R)-pantothenate + ATP = (R)-4'-phosphopantothenate + ADP + H(+). It functions in the pathway cofactor biosynthesis; coenzyme A biosynthesis; CoA from (R)-pantothenate: step 1/5. Its function is as follows. Catalyzes the phosphorylation of pantothenate (Pan), the first step in CoA biosynthesis. The sequence is that of Type III pantothenate kinase from Frankia casuarinae (strain DSM 45818 / CECT 9043 / HFP020203 / CcI3).